Here is a 428-residue protein sequence, read N- to C-terminus: Adenylosuccinate synthetase (428 aa).

Residues 12–18 (GDEGKGK) and 40–42 (GHT) contribute to the GTP site. Asp-13 (proton acceptor) is an active-site residue. Residues Asp-13 and Gly-40 each contribute to the Mg(2+) site. Residues 13–16 (DEGK), 38–41 (NAGH), Thr-130, Arg-144, Gln-225, Thr-240, and Arg-304 contribute to the IMP site. His-41 functions as the Proton donor in the catalytic mechanism. 300–306 (VTTGRAR) provides a ligand contact to substrate. GTP-binding positions include Arg-306, 332-334 (KID), and 414-416 (SVG).

Belongs to the adenylosuccinate synthetase family. Homodimer. Mg(2+) is required as a cofactor.

It localises to the cytoplasm. The enzyme catalyses IMP + L-aspartate + GTP = N(6)-(1,2-dicarboxyethyl)-AMP + GDP + phosphate + 2 H(+). It participates in purine metabolism; AMP biosynthesis via de novo pathway; AMP from IMP: step 1/2. Functionally, plays an important role in the de novo pathway of purine nucleotide biosynthesis. Catalyzes the first committed step in the biosynthesis of AMP from IMP. The chain is Adenylosuccinate synthetase from Clostridium botulinum (strain 657 / Type Ba4).